The primary structure comprises 448 residues: MRSCLSIVLAAGEGTRMKSSLPKVLHKIAGLPLVCHVIKQIELAGASQLAVVVGAGAQDVTHVVQSFIKSVMIFEQKERLGTAHAVLSARLALQKEVDDVLIVFGDTPLIKQDSLLKVREQLAVGADVVVAGFYASDPTGYGRLLEKNGKLIAIVEEKDASDEEKKISFCNGGILALNGKRALSLLEKVNNYNSKQEYYLTDIVSIASREGLEVQVVEVPFDNIVGINNCFELFEADSLWQKRKARDLMLSGVTILKPETVYFSYDTEIEQGVVIEPNVYFGLGVKVQSGAVIHAFSYLEGAVVGIDAQIGPYAHLRPGTELARSVKIGNFCEVKKAKIGEASKINHLSYIGDAEIGAQTNIGAGTITCNYDGFHKYKIVIGDHAFIGSNSALVSPLMIGNGSYIASGSVITEDVPINSMAFGRARQVTKKDYAAKLRVRLSGNQQKK.

The tract at residues 1–230 is pyrophosphorylase; that stretch reads MRSCLSIVLA…FDNIVGINNC (230 aa). UDP-N-acetyl-alpha-D-glucosamine-binding positions include 9–12, lysine 23, glutamine 76, and 81–82; these read LAAG and GT. Aspartate 106 is a binding site for Mg(2+). UDP-N-acetyl-alpha-D-glucosamine contacts are provided by glycine 142, glutamate 156, asparagine 171, and asparagine 228. Residue asparagine 228 participates in Mg(2+) binding. The segment at 231–251 is linker; that stretch reads FELFEADSLWQKRKARDLMLS. An N-acetyltransferase region spans residues 252–448; that stretch reads GVTILKPETV…VRLSGNQQKK (197 aa). Arginine 317 and lysine 335 together coordinate UDP-N-acetyl-alpha-D-glucosamine. Catalysis depends on histidine 347, which acts as the Proton acceptor. Residues tyrosine 350 and asparagine 361 each coordinate UDP-N-acetyl-alpha-D-glucosamine. Acetyl-CoA-binding positions include alanine 364, 370–371, serine 389, serine 407, and arginine 424; that span reads NY.

This sequence in the N-terminal section; belongs to the N-acetylglucosamine-1-phosphate uridyltransferase family. The protein in the C-terminal section; belongs to the transferase hexapeptide repeat family. As to quaternary structure, homotrimer. It depends on Mg(2+) as a cofactor.

It is found in the cytoplasm. The enzyme catalyses alpha-D-glucosamine 1-phosphate + acetyl-CoA = N-acetyl-alpha-D-glucosamine 1-phosphate + CoA + H(+). It carries out the reaction N-acetyl-alpha-D-glucosamine 1-phosphate + UTP + H(+) = UDP-N-acetyl-alpha-D-glucosamine + diphosphate. Its pathway is nucleotide-sugar biosynthesis; UDP-N-acetyl-alpha-D-glucosamine biosynthesis; N-acetyl-alpha-D-glucosamine 1-phosphate from alpha-D-glucosamine 6-phosphate (route II): step 2/2. It participates in nucleotide-sugar biosynthesis; UDP-N-acetyl-alpha-D-glucosamine biosynthesis; UDP-N-acetyl-alpha-D-glucosamine from N-acetyl-alpha-D-glucosamine 1-phosphate: step 1/1. The protein operates within bacterial outer membrane biogenesis; LPS lipid A biosynthesis. Functionally, catalyzes the last two sequential reactions in the de novo biosynthetic pathway for UDP-N-acetylglucosamine (UDP-GlcNAc). The C-terminal domain catalyzes the transfer of acetyl group from acetyl coenzyme A to glucosamine-1-phosphate (GlcN-1-P) to produce N-acetylglucosamine-1-phosphate (GlcNAc-1-P), which is converted into UDP-GlcNAc by the transfer of uridine 5-monophosphate (from uridine 5-triphosphate), a reaction catalyzed by the N-terminal domain. The protein is Bifunctional protein GlmU of Bartonella quintana (strain Toulouse) (Rochalimaea quintana).